Here is a 641-residue protein sequence, read N- to C-terminus: Calpain-6 (641 aa).

Residues 26–343 (LFCDPTFLPE…FHKLNVCRNV (318 aa)) form the Calpain catalytic domain. The interval 344-495 (NNPIFGRKEL…IFSEVPVQLR (152 aa)) is domain III. The region spanning 498–621 (TLDMPKMSCW…YLRKKGGPTA (124 aa)) is the C2 domain.

The protein belongs to the peptidase C2 family. In terms of assembly, interacts (via domain III) with microtubules. Interacts (via domain II) with ARHGEF2 (via the N-terminal zinc finger). As to expression, expressed only in placenta.

Its subcellular location is the cytoplasm. It localises to the perinuclear region. It is found in the cytoskeleton. The protein localises to the spindle. Functionally, microtubule-stabilizing protein that may be involved in the regulation of microtubule dynamics and cytoskeletal organization. May act as a regulator of RAC1 activity through interaction with ARHGEF2 to control lamellipodial formation and cell mobility. Does not seem to have protease activity as it has lost the active site residues. The polypeptide is Calpain-6 (CAPN6) (Homo sapiens (Human)).